The chain runs to 307 residues: Ribosomal RNA small subunit methyltransferase A (307 aa).

6 residues coordinate S-adenosyl-L-methionine: asparagine 35, valine 37, glycine 62, glutamate 83, aspartate 113, and asparagine 136.

This sequence belongs to the class I-like SAM-binding methyltransferase superfamily. rRNA adenine N(6)-methyltransferase family. RsmA subfamily.

Its subcellular location is the cytoplasm. It carries out the reaction adenosine(1518)/adenosine(1519) in 16S rRNA + 4 S-adenosyl-L-methionine = N(6)-dimethyladenosine(1518)/N(6)-dimethyladenosine(1519) in 16S rRNA + 4 S-adenosyl-L-homocysteine + 4 H(+). In terms of biological role, specifically dimethylates two adjacent adenosines (A1518 and A1519) in the loop of a conserved hairpin near the 3'-end of 16S rRNA in the 30S particle. May play a critical role in biogenesis of 30S subunits. The chain is Ribosomal RNA small subunit methyltransferase A from Bifidobacterium longum subsp. infantis (strain ATCC 15697 / DSM 20088 / JCM 1222 / NCTC 11817 / S12).